Reading from the N-terminus, the 1149-residue chain is Probable phospholipid-transporting ATPase IA (1149 aa).

The Cytoplasmic portion of the chain corresponds to 1 to 65; sequence MPTMRRTVSE…TAKYNIITFL (65 aa). Phosphoserine is present on Ser25. Thr28 bears the Phosphothreonine mark. At Ser29 the chain carries Phosphoserine. The chain crosses the membrane as a helical span at residues 66 to 86; the sequence is PRFLYSQFRRAANSFFLFIAL. Residues 87 to 92 lie on the Extracellular side of the membrane; it reads LQQIPD. A helical membrane pass occupies residues 93-115; it reads VSPTGRYTTLVPLLFILAVAAIK. At 116–297 the chain is on the cytoplasmic side; it reads EIIEDIKRHK…SNVERITNVQ (182 aa). The chain crosses the membrane as a helical span at residues 298-319; that stretch reads ILILFCILIAMSLVCSVGSAIW. Residues 320–344 lie on the Extracellular side of the membrane; the sequence is NRRHSGRDWYLNLNYGGANNFGLNF. A helical membrane pass occupies residues 345 to 366; the sequence is LTFIILFNNLIPISLLVTLEVV. The Cytoplasmic portion of the chain corresponds to 367-842; it reads KFTQAYFINW…GAWNYNRGSK (476 aa). Asp409 (4-aspartylphosphate intermediate) is an active-site residue. ATP-binding positions include Asp409, Lys410, Thr411, Glu493, Phe534, Lys557, Arg590, Thr670, Gly671, Asp672, 726–733, Arg760, and Lys766; that span reads ALIIDGKT. Asp409 contributes to the Mg(2+) binding site. A Mg(2+)-binding site is contributed by Thr411. Asp786 provides a ligand contact to Mg(2+). ATP contacts are provided by Asn789 and Asp790. Asp790 lines the Mg(2+) pocket. Residues 843–863 traverse the membrane as a helical segment; the sequence is CILYCFYKNIVLYIIEIWFAF. Topologically, residues 864–875 are extracellular; it reads VNGFSGQILFER. A helical membrane pass occupies residues 876–895; it reads WCIGLYNVMFTAMPPLTLGI. Over 896–925 the chain is Cytoplasmic; it reads FERSCRKEYMLKYPELYKTSQNALDFNTKV. The helical transmembrane segment at 926-947 threads the bilayer; sequence FWVHCLNGLFHSVILFWFPLKA. Residues 948–961 are Extracellular-facing; it reads LQYGTVFENGRTSD. Residues 962–984 form a helical membrane-spanning segment; that stretch reads YLLLGNFVYTFVVITVCLKAGLE. Residues 985-990 are Cytoplasmic-facing; sequence TSYWTW. The helical transmembrane segment at 991-1011 threads the bilayer; that stretch reads FSHIAIWGSIALWVVFFGIYS. The Extracellular segment spans residues 1012–1029; that stretch reads SLWPAVPMAPDMSGEAAM. Residues 1030 to 1055 form a helical membrane-spanning segment; sequence LFSSGVFWMGLLFIPVASLLLDVVYK. At 1056–1149 the chain is on the cytoplasmic side; the sequence is VIKRTAFKTL…DTTKQRPDEW (94 aa). 1080–1087 lines the ATP pocket; the sequence is GAVVLGKS. Residue Ser1111 is modified to Phosphoserine.

This sequence belongs to the cation transport ATPase (P-type) (TC 3.A.3) family. Type IV subfamily. Component of a P4-ATPase flippase complex which consists of a catalytic alpha subunit and an accessory beta subunit. Interacts with TMEM30A to form a flippase complex; this complex forms an intermediate phosphoenzyme. Interacts with TMEM30B; this interaction is reported conflictingly. Mg(2+) is required as a cofactor. In terms of processing, cleaved by calpain in a caspase- and calcium influx-dependent manner during platelet apoptosis leading to a 100 kDa polypeptide. As to expression, kidney.

The protein localises to the cytoplasmic vesicle. Its subcellular location is the secretory vesicle. It is found in the chromaffin granule membrane. It localises to the cytoplasmic granule. The protein resides in the cell membrane. The protein localises to the endoplasmic reticulum. Its subcellular location is the golgi apparatus. The catalysed reaction is ATP + H2O + phospholipidSide 1 = ADP + phosphate + phospholipidSide 2.. It catalyses the reaction a 1,2-diacyl-sn-glycero-3-phospho-L-serine(out) + ATP + H2O = a 1,2-diacyl-sn-glycero-3-phospho-L-serine(in) + ADP + phosphate + H(+). Its function is as follows. Catalytic component of a P4-ATPase flippase complex which catalyzes the hydrolysis of ATP coupled to the transport of aminophospholipids from the outer to the inner leaflet of various membranes and ensures the maintenance of asymmetric distribution of phospholipids. Phospholipid translocation also seems to be implicated in vesicle formation and in uptake of lipid signaling molecules. In vitro, its ATPase activity is selectively and stereospecifically stimulated by phosphatidylserine (PS). The flippase complex ATP8A1:TMEM30A seems to play a role in regulation of cell migration probably involving flippase-mediated translocation of phosphatidylethanolamine (PE) at the cell membrane. Acts as aminophospholipid translocase at the cell membrane in neuronal cells. This Bos taurus (Bovine) protein is Probable phospholipid-transporting ATPase IA.